The primary structure comprises 113 residues: Large ribosomal subunit protein bL19 (113 aa).

This sequence belongs to the bacterial ribosomal protein bL19 family.

In terms of biological role, this protein is located at the 30S-50S ribosomal subunit interface and may play a role in the structure and function of the aminoacyl-tRNA binding site. The sequence is that of Large ribosomal subunit protein bL19 from Mycobacterium sp. (strain JLS).